Here is a 97-residue protein sequence, read N- to C-terminus: U6-theraphotoxin-Hhn1a 4 (97 aa).

The first 33 residues, 1–33, serve as a signal peptide directing secretion; that stretch reads MLIKQFSRRSKNMKVQILLAFAALFVLAVGSYA. Positions 34–61 are excised as a propeptide; the sequence is SESKKLDLRDALLSAMFSADYQLNPQER. Intrachain disulfides connect Cys63–Cys77, Cys70–Cys82, and Cys76–Cys89.

It belongs to the neurotoxin 10 (Hwtx-1) family. 12 (Hntx-12) subfamily. As to expression, expressed by the venom gland.

It localises to the secreted. Functionally, ion channel inhibitor. This Cyriopagopus hainanus (Chinese bird spider) protein is U6-theraphotoxin-Hhn1a 4.